A 538-amino-acid polypeptide reads, in one-letter code: Lipid scramblase CLPTM1L (538 aa).

At 1–10 (MWSGRSSFTS) the chain is on the cytoplasmic side. Residues 11–31 (LVVGVFVVYVVHTCWVMYGIV) traverse the membrane as a helical segment. Topologically, residues 32–284 (YTRPCSGHGR…VKGIFVDTNL (253 aa)) are extracellular. Asn-91 and Asn-101 each carry an N-linked (GlcNAc...) asparagine glycan. A helical membrane pass occupies residues 285–305 (YFLALTFFVAAFHLLFDFLAF). At 306 to 324 (KNDISFWKKKKSMIGMSTK) the chain is on the cytoplasmic side. Residues 325 to 341 (AVLWRCFSTVVIFLFLL) traverse the membrane as a helical segment. The Extracellular portion of the chain corresponds to 342–402 (DEQTSLPVLV…TEEYDAQAMK (61 aa)). The helical transmembrane segment at 403–423 (YLSYLLYPLCIGGAIYSLLNI) threads the bilayer. At 424–428 (KYKSW) the chain is on the cytoplasmic side. Residues 429-449 (YSWLINSFVNGVYAFGFLFML) form a helical membrane-spanning segment. Over 450–538 (PQLFVNYKMK…DTPQRKPHTD (89 aa)) the chain is Extracellular.

Belongs to the CLPTM1 family.

The protein resides in the endoplasmic reticulum membrane. It carries out the reaction a 6-(alpha-D-glucosaminyl)-1-(1,2-diacyl-sn-glycero-3-phospho)-1D-myo-inositol(in) = a 6-(alpha-D-glucosaminyl)-1-(1,2-diacyl-sn-glycero-3-phospho)-1D-myo-inositol(out). The enzyme catalyses 6-(alpha-D-glucosaminyl)-(1-octadecanoyl,2-(9Z)-octadecenoyl-sn-glycero-3-phospho)-1D-myo-inositol(in) = 6-(alpha-D-glucosaminyl)-(1-octadecanoyl,2-(9Z)-octadecenoyl-sn-glycero-3-phospho)-1D-myo-inositol(out). It catalyses the reaction a 1,2-diacyl-sn-glycero-3-phospho-(1D-myo-inositol)(in) = a 1,2-diacyl-sn-glycero-3-phospho-(1D-myo-inositol)(out). The catalysed reaction is a 1,2-diacyl-sn-glycero-3-phosphocholine(in) = a 1,2-diacyl-sn-glycero-3-phosphocholine(out). It carries out the reaction a 1,2-diacyl-sn-glycero-3-phosphoethanolamine(in) = a 1,2-diacyl-sn-glycero-3-phosphoethanolamine(out). Scramblase that mediates the translocation of glucosaminylphosphatidylinositol (alpha-D-GlcN-(1-6)-(1,2-diacyl-sn-glycero-3-phospho)-1D-myo-inositol, GlcN-PI) across the endoplasmic reticulum (ER) membrane, from the cytosolic leaflet to the luminal leaflet of the ER membrane, where it participates in the biosynthesis of glycosylphosphatidylinositol (GPI). GPI is a lipid glycoconjugate involved in post-translational modification of proteins. Can also translocate 1,2-diacyl-sn-glycero-3-phospho-(1D-myo-inositol) (phosphatidylinositol or PI), as well as several other phospholipids (1,2-diacyl-sn-glycero-3-phosphocholine, 1,2-diacyl-sn-glycero-3-phosphoethanolamine), and N-acetylglucosaminylphosphatidylinositol (GlcNAc-PI) in vitro. The protein is Lipid scramblase CLPTM1L (CLPTM1L) of Bos taurus (Bovine).